The sequence spans 121 residues: Large ribosomal subunit protein uL22 (121 aa).

This sequence belongs to the universal ribosomal protein uL22 family. As to quaternary structure, part of the 50S ribosomal subunit.

This protein binds specifically to 23S rRNA; its binding is stimulated by other ribosomal proteins, e.g. L4, L17, and L20. It is important during the early stages of 50S assembly. It makes multiple contacts with different domains of the 23S rRNA in the assembled 50S subunit and ribosome. Its function is as follows. The globular domain of the protein is located near the polypeptide exit tunnel on the outside of the subunit, while an extended beta-hairpin is found that lines the wall of the exit tunnel in the center of the 70S ribosome. The polypeptide is Large ribosomal subunit protein uL22 (Arthrobacter sp. (strain FB24)).